Reading from the N-terminus, the 295-residue chain is Ribosomal protein L11 methyltransferase (295 aa).

Thr138, Gly161, Asp183, and Asn230 together coordinate S-adenosyl-L-methionine.

This sequence belongs to the methyltransferase superfamily. PrmA family.

Its subcellular location is the cytoplasm. It carries out the reaction L-lysyl-[protein] + 3 S-adenosyl-L-methionine = N(6),N(6),N(6)-trimethyl-L-lysyl-[protein] + 3 S-adenosyl-L-homocysteine + 3 H(+). Its function is as follows. Methylates ribosomal protein L11. The sequence is that of Ribosomal protein L11 methyltransferase from Bradyrhizobium diazoefficiens (strain JCM 10833 / BCRC 13528 / IAM 13628 / NBRC 14792 / USDA 110).